Consider the following 575-residue polypeptide: Chaperonin CPN60-1, mitochondrial (575 aa).

The transit peptide at 1–32 directs the protein to the mitochondrion; the sequence is MHRFATGLASKARLARNGANQIASRSNWRRNY.

It belongs to the chaperonin (HSP60) family.

The protein resides in the mitochondrion. In terms of biological role, implicated in mitochondrial protein import and macromolecular assembly. May facilitate the correct folding of imported proteins. May also prevent misfolding and promote the refolding and proper assembly of unfolded polypeptides generated under stress conditions in the mitochondrial matrix. This Cucurbita maxima (Pumpkin) protein is Chaperonin CPN60-1, mitochondrial (CPN60-1).